We begin with the raw amino-acid sequence, 290 residues long: MILMQPLSSLSKVGVILRPSSPSLKEFFLQVRSLFEREGIEVMLDSISGGMIGIYGCDFQRLCSESDMLVSIGGDGTLISVVRRSYPYGKPILGINMGRLGFLTDVRQDEVEAFVQKLKAGEYRIDSRLMLEGELSSPKGTQRFFAFNEAIVTRRPISGMIHVKASIGEEPFNTYFGDGLIVATPTGSTAYNISAGGPVVYPYSKNMILTPICAHSLTQRPLVLPSEFEVELEMLEGEFANIVVDGQEIMDFGYGDRLRLKVAERPALLVHKKEHNYFQVLREKFSWGDA.

Catalysis depends on aspartate 75, which acts as the Proton acceptor. Residues 75-76 (DG), 148-149 (NE), aspartate 178, 189-194 (TAYNIS), and glutamine 247 contribute to the NAD(+) site.

Belongs to the NAD kinase family. It depends on a divalent metal cation as a cofactor.

It is found in the cytoplasm. The catalysed reaction is NAD(+) + ATP = ADP + NADP(+) + H(+). Functionally, involved in the regulation of the intracellular balance of NAD and NADP, and is a key enzyme in the biosynthesis of NADP. Catalyzes specifically the phosphorylation on 2'-hydroxyl of the adenosine moiety of NAD to yield NADP. The sequence is that of NAD kinase from Wolinella succinogenes (strain ATCC 29543 / DSM 1740 / CCUG 13145 / JCM 31913 / LMG 7466 / NCTC 11488 / FDC 602W) (Vibrio succinogenes).